Here is a 303-residue protein sequence, read N- to C-terminus: Monoglyceride lipase (303 aa).

A Phosphothreonine modification is found at threonine 10. Tyrosine 58 carries the 3'-nitrotyrosine modification. The Nucleophile role is filled by serine 122. Serine 189 is modified (phosphoserine). Catalysis depends on charge relay system residues aspartate 239 and histidine 269.

Belongs to the AB hydrolase superfamily. Monoacylglycerol lipase family. Homodimer. Ubiquitous.

The protein localises to the cytoplasm. It localises to the cytosol. The protein resides in the membrane. The catalysed reaction is Hydrolyzes glycerol monoesters of long-chain fatty acids.. It catalyses the reaction a 1-acylglycerol + H2O = glycerol + a fatty acid + H(+). It carries out the reaction a 2-acylglycerol + H2O = glycerol + a fatty acid + H(+). The enzyme catalyses 2-(5Z,8Z,11Z,14Z-eicosatetraenoyl)-glycerol + H2O = glycerol + (5Z,8Z,11Z,14Z)-eicosatetraenoate + H(+). The catalysed reaction is 1-octanoylglycerol + H2O = octanoate + glycerol + H(+). It catalyses the reaction 1-decanoylglycerol + H2O = decanoate + glycerol + H(+). It carries out the reaction 1-dodecanoylglycerol + H2O = dodecanoate + glycerol + H(+). The enzyme catalyses 1-tetradecanoylglycerol + H2O = tetradecanoate + glycerol + H(+). The catalysed reaction is 2-hexadecanoylglycerol + H2O = glycerol + hexadecanoate + H(+). It catalyses the reaction 1-(9Z-octadecenoyl)-glycerol + H2O = glycerol + (9Z)-octadecenoate + H(+). It carries out the reaction 2-(9Z-octadecenoyl)-glycerol + H2O = glycerol + (9Z)-octadecenoate + H(+). The enzyme catalyses 2-(9Z,12Z-octadecadienoyl)-glycerol + H2O = (9Z,12Z)-octadecadienoate + glycerol + H(+). The catalysed reaction is 1-(5Z,8Z,11Z,14Z-eicosatetraenoyl)-glycerol + H2O = glycerol + (5Z,8Z,11Z,14Z)-eicosatetraenoate + H(+). It catalyses the reaction 1-(9Z,12Z-octadecadienoyl)-glycerol + H2O = (9Z,12Z)-octadecadienoate + glycerol + H(+). It carries out the reaction 1-hexadecanoylglycerol + H2O = glycerol + hexadecanoate + H(+). The enzyme catalyses 1-octadecanoylglycerol + H2O = octadecanoate + glycerol + H(+). The catalysed reaction is prostaglandin E2 1-glyceryl ester + H2O = prostaglandin E2 + glycerol + H(+). It catalyses the reaction prostaglandin D2-1-glycerol ester + H2O = prostaglandin D2 + glycerol + H(+). It carries out the reaction 2-glyceryl-15-deoxy-Delta(12,14)-prostaglandin J2 + H2O = 15-deoxy-Delta(12,14)-prostaglandin J2 + glycerol + H(+). The enzyme catalyses prostaglandin F2alpha 1-glyceryl ester + H2O = prostaglandin F2alpha + glycerol + H(+). The protein operates within glycerolipid metabolism; triacylglycerol degradation. Converts monoacylglycerides to free fatty acids and glycerol. Hydrolyzes the endocannabinoid 2-arachidonoylglycerol, and thereby contributes to the regulation of endocannabinoid signaling, nociperception and perception of pain. Regulates the levels of fatty acids that serve as signaling molecules and promote cancer cell migration, invasion and tumor growth. This is Monoglyceride lipase from Mus musculus (Mouse).